Consider the following 224-residue polypeptide: Cell division protein SepF (224 aa).

Residues 21–78 (DDYYEDDDRGPAPRGYRRPREDRFEDEGYAPRGYDGHPEDRRRDYDEPPAYRAGLAGG) form a disordered region. The span at 54–66 (YDGHPEDRRRDYD) shows a compositional bias: basic and acidic residues.

The protein belongs to the SepF family. In terms of assembly, homodimer. Interacts with FtsZ.

The protein resides in the cytoplasm. Functionally, cell division protein that is part of the divisome complex and is recruited early to the Z-ring. Probably stimulates Z-ring formation, perhaps through the cross-linking of FtsZ protofilaments. Its function overlaps with FtsA. This is Cell division protein SepF from Mycolicibacterium gilvum (strain PYR-GCK) (Mycobacterium gilvum (strain PYR-GCK)).